The following is a 230-amino-acid chain: Cytochrome c oxidase subunit 2 (230 aa).

The Mitochondrial intermembrane segment spans residues methionine 1 to serine 14. Residues proline 15 to threonine 45 traverse the membrane as a helical segment. Topologically, residues alanine 46–glutamine 59 are mitochondrial matrix. The chain crosses the membrane as a helical span at residues glutamate 60 to methionine 87. The Mitochondrial intermembrane segment spans residues aspartate 88–alanine 230. Cu cation contacts are provided by histidine 161, cysteine 196, glutamate 198, cysteine 200, histidine 204, and methionine 207. Residue glutamate 198 coordinates Mg(2+).

This sequence belongs to the cytochrome c oxidase subunit 2 family. Component of the cytochrome c oxidase (complex IV, CIV), a multisubunit enzyme composed of 14 subunits. The complex is composed of a catalytic core of 3 subunits MT-CO1, MT-CO2 and MT-CO3, encoded in the mitochondrial DNA, and 11 supernumerary subunits COX4I, COX5A, COX5B, COX6A, COX6B, COX6C, COX7A, COX7B, COX7C, COX8 and NDUFA4, which are encoded in the nuclear genome. The complex exists as a monomer or a dimer and forms supercomplexes (SCs) in the inner mitochondrial membrane with NADH-ubiquinone oxidoreductase (complex I, CI) and ubiquinol-cytochrome c oxidoreductase (cytochrome b-c1 complex, complex III, CIII), resulting in different assemblies (supercomplex SCI(1)III(2)IV(1) and megacomplex MCI(2)III(2)IV(2)). Found in a complex with TMEM177, COA6, COX18, COX20, SCO1 and SCO2. Interacts with TMEM177 in a COX20-dependent manner. Interacts with COX20. Interacts with COX16. The cofactor is Cu cation.

The protein resides in the mitochondrion inner membrane. It catalyses the reaction 4 Fe(II)-[cytochrome c] + O2 + 8 H(+)(in) = 4 Fe(III)-[cytochrome c] + 2 H2O + 4 H(+)(out). Component of the cytochrome c oxidase, the last enzyme in the mitochondrial electron transport chain which drives oxidative phosphorylation. The respiratory chain contains 3 multisubunit complexes succinate dehydrogenase (complex II, CII), ubiquinol-cytochrome c oxidoreductase (cytochrome b-c1 complex, complex III, CIII) and cytochrome c oxidase (complex IV, CIV), that cooperate to transfer electrons derived from NADH and succinate to molecular oxygen, creating an electrochemical gradient over the inner membrane that drives transmembrane transport and the ATP synthase. Cytochrome c oxidase is the component of the respiratory chain that catalyzes the reduction of oxygen to water. Electrons originating from reduced cytochrome c in the intermembrane space (IMS) are transferred via the dinuclear copper A center (CU(A)) of subunit 2 and heme A of subunit 1 to the active site in subunit 1, a binuclear center (BNC) formed by heme A3 and copper B (CU(B)). The BNC reduces molecular oxygen to 2 water molecules using 4 electrons from cytochrome c in the IMS and 4 protons from the mitochondrial matrix. This is Cytochrome c oxidase subunit 2 (mt-co2) from Tetraodon nigroviridis (Spotted green pufferfish).